The chain runs to 316 residues: Annexin A13 (316 aa).

The N-myristoyl glycine moiety is linked to residue Gly-2. Annexin repeat units follow at residues 14 to 85, 86 to 157, 169 to 241, and 245 to 316; these read FDVD…ALLD, RPSE…SLLQ, DLAG…TLVR, and DCED…ALLH.

The protein belongs to the annexin family. As to quaternary structure, monomer and homodimer. Detected in epithelial cells in colon and jejunum (at protein level). Detected in epithelial cells in jejunum.

It is found in the apical cell membrane. The protein localises to the cell membrane. Its subcellular location is the cytoplasmic vesicle. In terms of biological role, binds to membranes enriched in phosphatidylserine or phosphatidylglycerol in a calcium-dependent manner. Half-maximal membrane binding requires about 60 uM calcium. Does not bind to membranes that lack phospholipids with an acidic headgroup. Binds to membranes enriched in phosphatidylserine or phosphatidylglycerol in a calcium-dependent manner, but requires higher calcium levels for membrane binding than isoform A. Half-maximal membrane binding requires about 320 uM calcium. The protein is Annexin A13 (ANXA13) of Homo sapiens (Human).